The chain runs to 2294 residues: Reducing polyketide synthase BOA9 (2294 aa).

Residues 4 to 409 (PEPVAIIGMG…GANATAIVEA (406 aa)) form the Ketosynthase family 3 (KS3) domain. A malonyl-CoA:ACP transacylase (MAT) domain region spans residues 537 to 853 (IFTGQGAQNA…DYAATLVRGQ (317 aa)). The For malonyltransferase activity role is filled by Ser-630. An N-terminal hotdog fold region spans residues 930–1067 (HDLLGAILPG…GTVTKKKAVT (138 aa)). The tract at residues 930 to 1104 (HDLLGAILPG…LNYGPAFNGL (175 aa)) is dehydratase (DH) domain. A PKS/mFAS DH domain is found at 930 to 1236 (HDLLGAILPG…CTQYSEALDD (307 aa)). The active-site Proton acceptor; for dehydratase activity is the His-962. The interval 1078–1236 (QEPKAARTWY…CTQYSEALDD (159 aa)) is C-terminal hotdog fold. Asp-1142 (proton donor; for dehydratase activity) is an active-site residue. The interval 1618–1908 (GIFDTIHFKD…KNSRIGRVVV (291 aa)) is enoyl reductase (ER) domain. The ketoreductase (KR) domain stretch occupies residues 1934-2107 (VHTYLLGVLE…LPATTISLTV (174 aa)). The 79-residue stretch at 2214-2292 (LLLPDILEMI…SLAKKIYDIR (79 aa)) folds into the Carrier domain. Residue Ser-2251 is modified to O-(pantetheine 4'-phosphoryl)serine.

It functions in the pathway polyketide biosynthesis. Its function is as follows. Reducing polyketide synthase; part of the gene cluster B that mediates the biosynthesis of botcinic acid and its botcinin derivatives, acetate-derived polyketides that contribute to virulence when combined with the sesquiterpene botrydial. Botcinic acid and its derivatives have been shown to induce chlorosis and necrosis during host plant infection, but also have antifungal activities. Two polyketide synthases, BOA6 and BOA9, are involved in the biosynthesis of botcinins. BOA6 mediates the formation of the per-methylated tetraketide core by condensation of four units of malonyl-CoA with one unit of acetyl-CoA, which would be methylated in activated methylene groups to yield a bicyclic acid intermediate that could then either be converted to botrylactone derivatives or lose the starter acetate unit through a retro-Claisen type C-C bond cleavage to yield botcinin derivatives. The second polyketide synthase, BOA9, is probably required for the biosynthesis of the tetraketide side chain of botcinins. The methyltransferase (MT) domain within BOA6 is probably responsible for the incorporation of four methyl groups. The trans-enoyl reductase BOA5 might take over the enoyl reductase function of BOA6 that misses an ER domain. The monooxygenases BOA2, BOA3 and BOA4 might be involved in further hydroxylations at C4, C5 and C8, whereas BOA7, close to BOA9, could potentially be involved in the hydroxylation at C4 in the side chain of botcinins. This Botryotinia fuckeliana (strain B05.10) (Noble rot fungus) protein is Reducing polyketide synthase BOA9.